The following is a 447-amino-acid chain: GTPase Der (447 aa).

2 consecutive EngA-type G domains span residues 3-167 (PVVA…HLED) and 180-353 (IKLA…KAAN). Residues 9-16 (GRPNVGKS), 56-60 (DTGGF), 119-122 (NKAE), 186-193 (GRPNVGKS), 233-237 (DTAGL), and 298-301 (NKWD) each bind GTP. The KH-like domain occupies 354-438 (CKMSTPILTR…PMRIEFKSST (85 aa)).

It belongs to the TRAFAC class TrmE-Era-EngA-EngB-Septin-like GTPase superfamily. EngA (Der) GTPase family. Associates with the 50S ribosomal subunit.

In terms of biological role, GTPase that plays an essential role in the late steps of ribosome biogenesis. This chain is GTPase Der, found in Albidiferax ferrireducens (strain ATCC BAA-621 / DSM 15236 / T118) (Rhodoferax ferrireducens).